The following is a 379-amino-acid chain: Galactose-1-phosphate uridylyltransferase (379 aa).

A compositionally biased stretch (polar residues) spans 1 to 15 (MSQSGADPEQRQQAS). The tract at residues 1-20 (MSQSGADPEQRQQASEADAM) is disordered. Cys-75 is a Zn(2+) binding site. Residues Ala-81, 97–98 (ND), and Asn-173 each bind UDP-alpha-D-glucose. Position 184 (His-184) interacts with Zn(2+). Catalysis depends on His-186, which acts as the Tele-UMP-histidine intermediate. Residue Gln-188 coordinates UDP-alpha-D-glucose. The Zn(2+) site is built by Glu-202, His-301, His-319, and His-321. UDP-alpha-D-glucose-binding positions include 334–337 (KFMV) and 339–340 (YE).

It belongs to the galactose-1-phosphate uridylyltransferase type 1 family. Homodimer. It depends on Zn(2+) as a cofactor.

It carries out the reaction alpha-D-galactose 1-phosphate + UDP-alpha-D-glucose = alpha-D-glucose 1-phosphate + UDP-alpha-D-galactose. The protein operates within carbohydrate metabolism; galactose metabolism. In terms of biological role, plays an important role in galactose metabolism. This Rattus norvegicus (Rat) protein is Galactose-1-phosphate uridylyltransferase (Galt).